Reading from the N-terminus, the 121-residue chain is Small ribosomal subunit protein uS13 (121 aa).

The tract at residues 91–121 (HRMSLPVRGQRTRTNARTRRGSRKTVAGRKK) is disordered. The segment covering 100 to 121 (QRTRTNARTRRGSRKTVAGRKK) has biased composition (basic residues).

This sequence belongs to the universal ribosomal protein uS13 family. As to quaternary structure, part of the 30S ribosomal subunit. Forms a loose heterodimer with protein S19. Forms two bridges to the 50S subunit in the 70S ribosome.

Located at the top of the head of the 30S subunit, it contacts several helices of the 16S rRNA. In the 70S ribosome it contacts the 23S rRNA (bridge B1a) and protein L5 of the 50S subunit (bridge B1b), connecting the 2 subunits; these bridges are implicated in subunit movement. Contacts the tRNAs in the A and P-sites. The polypeptide is Small ribosomal subunit protein uS13 (Prochlorococcus marinus (strain MIT 9515)).